A 454-amino-acid polypeptide reads, in one-letter code: tRNA modification GTPase MnmE (454 aa).

Positions 23, 80, and 120 each coordinate (6S)-5-formyl-5,6,7,8-tetrahydrofolate. The region spanning 216 to 377 is the TrmE-type G domain; it reads GMKVVIAGRP…LRNHLKQSMG (162 aa). Residue Asn226 participates in K(+) binding. GTP is bound by residues 226-231, 245-251, 270-273, 335-338, and 358-360; these read NAGKSS, TDIAGTT, DTAG, NKAD, and SAR. Position 230 (Ser230) interacts with Mg(2+). Residues Thr245, Ile247, and Thr250 each coordinate K(+). Mg(2+) is bound at residue Thr251. Lys454 contacts (6S)-5-formyl-5,6,7,8-tetrahydrofolate.

Belongs to the TRAFAC class TrmE-Era-EngA-EngB-Septin-like GTPase superfamily. TrmE GTPase family. Homodimer. Heterotetramer of two MnmE and two MnmG subunits. K(+) is required as a cofactor.

It localises to the cytoplasm. Its function is as follows. Exhibits a very high intrinsic GTPase hydrolysis rate. Involved in the addition of a carboxymethylaminomethyl (cmnm) group at the wobble position (U34) of certain tRNAs, forming tRNA-cmnm(5)s(2)U34. The sequence is that of tRNA modification GTPase MnmE from Shigella flexneri serotype 5b (strain 8401).